Consider the following 274-residue polypeptide: Ceramide synthase (274 aa).

The region spanning 34 to 261 (ADAVIVSARL…ICRGACRLFW (228 aa)) is the TLC domain. 4 helical membrane-spanning segments follow: residues 130 to 150 (FLMVLHHAAMVLVCFPLSVVW), 159 to 179 (LGCMLMAEVSTPFVCLGKILI), 194 to 214 (ALMLLSFLCCRVLLFPYLYWA), and 223 to 243 (LLAVPLAIPAHVNLGAALLLA).

Expressed in testis. Expressed in the retina with higher expression levels in the macular than in the peripheral region.

It localises to the golgi apparatus membrane. The protein resides in the endoplasmic reticulum membrane. The enzyme catalyses sphing-4-enine + octadecanoyl-CoA = N-octadecanoylsphing-4-enine + CoA + H(+). It carries out the reaction eicosanoyl-CoA + sphing-4-enine = N-eicosanoyl-sphing-4-enine + CoA + H(+). It catalyses the reaction sphing-4-enine + hexadecanoyl-CoA = N-hexadecanoylsphing-4-enine + CoA + H(+). Involved in ceramide synthesis. The sequence is that of Ceramide synthase from Homo sapiens (Human).